The primary structure comprises 151 residues: Putative UPF0320 protein YFL063W (151 aa).

The protein belongs to the UPF0320 family.

The chain is Putative UPF0320 protein YFL063W from Saccharomyces cerevisiae (strain ATCC 204508 / S288c) (Baker's yeast).